Here is a 1049-residue protein sequence, read N- to C-terminus: Protein argonaute 12 (1049 aa).

Residues 1–53 are compositionally biased toward gly residues; sequence MSSRGGGGGGRRGGRGGGGGREGGGGGGGGGGRGGQGRGDLGVVGERQGGGRG. Disordered stretches follow at residues 1 to 101 and 144 to 192; these read MSSR…GVQV and GGAP…KAVT. Residues 54–65 show a composition bias toward basic and acidic residues; the sequence is AGERGGRHDAPR. A compositionally biased stretch (gly residues) spans 66 to 76; that stretch reads GRGGVAVGAGA. The segment covering 144 to 160 has biased composition (low complexity); sequence GGAPPAGQGSSLAAAQG. The PAZ domain occupies 404 to 515; that stretch reads PVMDFAVQYL…LPMEVCSILE (112 aa). The region spanning 694 to 1012 is the Piwi domain; sequence LLIVILTEIS…GAFRARYYME (319 aa).

The protein belongs to the argonaute family. Ago subfamily.

Probably involved in the RNA silencing pathway. May bind to short RNAs such as microRNAs (miRNAs) or short interfering RNAs (siRNAs), and represses the translation of mRNAs which are complementary to them. The protein is Protein argonaute 12 (AGO12) of Oryza sativa subsp. japonica (Rice).